The sequence spans 446 residues: Probable beta-1,4-xylosyltransferase IRX9L (446 aa).

Positions 1-26 are disordered; sequence MSRRNAGAMQREGSVKDWEEFDPSPS. The Cytoplasmic segment spans residues 1–85; sequence MSRRNAGAMQ…SRSKGMSLKR (85 aa). The helical; Signal-anchor for type II membrane protein transmembrane segment at 86-106 threads the bilayer; the sequence is AMLQLLVCFMVGIFIGFTPPF. The Lumenal segment spans residues 107-446; sequence SVDLPGKIAS…RNLDAVVPIT (340 aa). N-linked (GlcNAc...) asparagine glycans are attached at residues Asn185, Asn258, Asn361, and Asn411.

This sequence belongs to the glycosyltransferase 43 family.

The protein resides in the golgi apparatus membrane. Probable beta-1,4-xylosyltransferase involved in xylan biosynthesis in cell walls. The protein is Probable beta-1,4-xylosyltransferase IRX9L of Oryza sativa subsp. japonica (Rice).